Consider the following 140-residue polypeptide: Probable transport accessory protein MmpS4 (140 aa).

The chain crosses the membrane as a helical span at residues 2 to 22; the sequence is LMRTWIPLVILVVVIVGGFTV.

Belongs to the MmpS family.

It is found in the cell membrane. The sequence is that of Probable transport accessory protein MmpS4 (mmpS4) from Mycobacterium bovis (strain ATCC BAA-935 / AF2122/97).